The following is a 372-amino-acid chain: Alpha-parvin (372 aa).

The span at 1–11 shows a compositional bias: low complexity; sequence MATSPQKSPSV. The disordered stretch occupies residues 1 to 45; that stretch reads MATSPQKSPSVPKSPTPKSPPSRKKDDSFLGKLGGTLARRKKAKE. At alanine 2 the chain carries N-acetylalanine. Residues serine 8, serine 14, and serine 19 each carry the phosphoserine modification. Positions 21–25 are interaction with ARHGAP31; that stretch reads PSRKK. Serine 28 and serine 62 each carry phosphoserine. Calponin-homology (CH) domains are found at residues 95–202 and 262–369; these read QELM…QYFR and NVVK…TKYR. The required for interaction with TESK1 and ILK stretch occupies residues 223–372; sequence GILQSRQIQE…NLFTKYRNVE (150 aa).

Belongs to the parvin family. As to quaternary structure, component of the heterotrimeric IPP (ILK-PINCH-PARVIN) complex composed of ILK, LIMS1/PINCH and PARVA; the complex binds to F-actin via the C-terminal tail of LIMS1 and the N-terminal region of PARVA, promoting F-actin filament bundling. Formation of the IPP complex is dependent on protein kinase C and precedes integrin-mediated cell adhesion and spreading. Interacts with TGFB1I1. Interacts with ARHGAP31. Interacts with the actin cytoskeleton. Interacts (via C-terminus) with TESK1 (via C-terminus); the interaction inhibits TESK1 kinase activity. Interacts with PXN/PAXILLIN (via LD motif 4). As to expression, widely expressed, with highest levels in heart, skeletal muscle, kidney and liver.

The protein resides in the cell junction. Its subcellular location is the focal adhesion. The protein localises to the cell membrane. It is found in the cytoplasm. It localises to the cytoskeleton. The protein resides in the myofibril. Its subcellular location is the sarcomere. The protein localises to the z line. In terms of biological role, plays a role in sarcomere organization and in smooth muscle cell contraction. Required for normal development of the embryonic cardiovascular system, and for normal septation of the heart outflow tract. Plays a role in sprouting angiogenesis and is required for normal adhesion of vascular smooth muscle cells to endothelial cells during blood vessel development. Plays a role in the reorganization of the actin cytoskeleton, formation of lamellipodia and ciliogenesis. Plays a role in the establishment of cell polarity, cell adhesion, cell spreading, and directed cell migration. Within the IPP (ILK-PINCH-PARVIN) complex, binds to F-actin, promoting F-actin bundling, a process required to generate force for actin cytoskeleton reorganization and subsequent dynamic cell adhesion events such as cell spreading and migration. The chain is Alpha-parvin (PARVA) from Homo sapiens (Human).